Reading from the N-terminus, the 332-residue chain is Fructose-1,6-bisphosphatase class 1 (332 aa).

Mg(2+) contacts are provided by Glu89, Asp110, Leu112, and Asp113. Substrate-binding positions include 113–116 (DGSS), Asn206, Tyr239, 257–259 (YLY), and Lys269. Mg(2+) is bound at residue Glu275.

Belongs to the FBPase class 1 family. In terms of assembly, homotetramer. The cofactor is Mg(2+).

The protein localises to the cytoplasm. It carries out the reaction beta-D-fructose 1,6-bisphosphate + H2O = beta-D-fructose 6-phosphate + phosphate. Its pathway is carbohydrate biosynthesis; gluconeogenesis. This Shigella sonnei (strain Ss046) protein is Fructose-1,6-bisphosphatase class 1.